The primary structure comprises 492 residues: MLTINLLLAVGALFWIYFLWSRRRLYFLMLKIPGPIGLPILGSSLENIITYKRKLSFRTKYLNKYGSTILTWMGPVPFIVTRDPKVVEDIFSSPDCHNKSQHIVNAITSCMGNGLLGKQDPHWLDRRKHFNPSFKQDLLLSFFHIFDAETKVLMNLLDTYVDKGEIDVVPEMLRWSFKIAAQTTMGSEVKHDEHFKNGSLVESFESLISHSTLNILMPLVQNRMISKICGYDKLRADNFSRIQKMLDNVVNKKVNPLPKTDSDPESNIVINRAMELYRKGDITYMDVKSECCIMIAAGYDTSALTVYHALFLLANHPEHQEAVFEELNGVFPDAGHFGITYPDMQKLDYLERVIKETLRLIPAIPITARETKNDVRLSNGVLIPKGVVIGIDMFHTHRNPEVWGPDADNFNPDNFLAENMEQKHPYAYIPFARGKRNCIGSKYAMMSSKFALCRILRNYKISTSTLYKDLVYVDNMTMKLAEYPRLKLQRRG.

Residue C438 participates in heme binding.

It belongs to the cytochrome P450 family. Requires heme as cofactor.

The protein localises to the endoplasmic reticulum membrane. Its subcellular location is the microsome membrane. Functionally, may be involved in the metabolism of insect hormones and in the breakdown of synthetic insecticides. The chain is Probable cytochrome P450 313a1 (Cyp313a1) from Drosophila melanogaster (Fruit fly).